The following is a 345-amino-acid chain: S-adenosylmethionine:tRNA ribosyltransferase-isomerase (345 aa).

This sequence belongs to the QueA family. As to quaternary structure, monomer.

The protein localises to the cytoplasm. The enzyme catalyses 7-aminomethyl-7-carbaguanosine(34) in tRNA + S-adenosyl-L-methionine = epoxyqueuosine(34) in tRNA + adenine + L-methionine + 2 H(+). It participates in tRNA modification; tRNA-queuosine biosynthesis. Functionally, transfers and isomerizes the ribose moiety from AdoMet to the 7-aminomethyl group of 7-deazaguanine (preQ1-tRNA) to give epoxyqueuosine (oQ-tRNA). The sequence is that of S-adenosylmethionine:tRNA ribosyltransferase-isomerase from Helicobacter pylori (strain G27).